We begin with the raw amino-acid sequence, 207 residues long: Ubiquitin-conjugating enzyme E2 E3 (207 aa).

A compositionally biased stretch (basic and acidic residues) spans 1–10 (MSSDRQRSDD). The tract at residues 1–63 (MSSDRQRSDD…KTTAKLSTSA (63 aa)) is disordered. Serine 2 bears the N-acetylserine mark. Serine 8 carries the phosphoserine modification. The span at 50 to 63 (KLSSKTTAKLSTSA) shows a compositional bias: low complexity. The 147-residue stretch at 61–207 (TSAKRIQKEL…ARQWTKRYAT (147 aa)) folds into the UBC core domain. Residue cysteine 145 is the Glycyl thioester intermediate of the active site.

Belongs to the ubiquitin-conjugating enzyme family. As to quaternary structure, the ubiquitin-loaded form interacts specifically with importin-11 (IPO11), leading to its import into the nucleus. Interacts with NEDD4L.

It is found in the nucleus. It localises to the cytoplasm. The catalysed reaction is S-ubiquitinyl-[E1 ubiquitin-activating enzyme]-L-cysteine + [E2 ubiquitin-conjugating enzyme]-L-cysteine = [E1 ubiquitin-activating enzyme]-L-cysteine + S-ubiquitinyl-[E2 ubiquitin-conjugating enzyme]-L-cysteine.. It participates in protein modification; protein ubiquitination. Accepts ubiquitin from the E1 complex and catalyzes its covalent attachment to other proteins. In vitro catalyzes 'Lys-11'- and 'Lys-48'-, as well as 'Lys-63'-linked polyubiquitination. Participates in the regulation of transepithelial sodium transport in renal cells. In Bos taurus (Bovine), this protein is Ubiquitin-conjugating enzyme E2 E3 (UBE2E3).